The chain runs to 131 residues: Large ribosomal subunit protein bL17 (131 aa).

The protein belongs to the bacterial ribosomal protein bL17 family. Part of the 50S ribosomal subunit. Contacts protein L32.

This Hamiltonella defensa subsp. Acyrthosiphon pisum (strain 5AT) protein is Large ribosomal subunit protein bL17.